Consider the following 394-residue polypeptide: Ribulose bisphosphate carboxylase large chain (394 aa).

Position 5 is an N6,N6,N6-trimethyllysine (K5). 2 residues coordinate substrate: N114 and T164. The Proton acceptor role is filled by K166. Position 168 (K168) interacts with substrate. Mg(2+) contacts are provided by K192, D194, and E195. N6-carboxylysine is present on K192. H285 serves as the catalytic Proton acceptor. Substrate is bound by residues R286, H318, and S370.

The protein belongs to the RuBisCO large chain family. Type I subfamily. Heterohexadecamer of 8 large chains and 8 small chains; disulfide-linked. The disulfide link is formed within the large subunit homodimers. Mg(2+) serves as cofactor. In terms of processing, the disulfide bond which can form in the large chain dimeric partners within the hexadecamer appears to be associated with oxidative stress and protein turnover.

It is found in the plastid. It localises to the chloroplast. It catalyses the reaction 2 (2R)-3-phosphoglycerate + 2 H(+) = D-ribulose 1,5-bisphosphate + CO2 + H2O. It carries out the reaction D-ribulose 1,5-bisphosphate + O2 = 2-phosphoglycolate + (2R)-3-phosphoglycerate + 2 H(+). RuBisCO catalyzes two reactions: the carboxylation of D-ribulose 1,5-bisphosphate, the primary event in carbon dioxide fixation, as well as the oxidative fragmentation of the pentose substrate in the photorespiration process. Both reactions occur simultaneously and in competition at the same active site. This is Ribulose bisphosphate carboxylase large chain (rbcL) from Nelumbo lutea (American lotus).